The chain runs to 156 residues: Cell division protein SepF (156 aa).

It belongs to the SepF family. Homodimer. Interacts with FtsZ.

The protein localises to the cytoplasm. Functionally, cell division protein that is part of the divisome complex and is recruited early to the Z-ring. Probably stimulates Z-ring formation, perhaps through the cross-linking of FtsZ protofilaments. Its function overlaps with FtsA. In Bacillus cytotoxicus (strain DSM 22905 / CIP 110041 / 391-98 / NVH 391-98), this protein is Cell division protein SepF.